The sequence spans 1186 residues: MYND-type zinc finger-containing chromatin reader ZMYND8 (1186 aa).

The span at 1–12 shows a compositional bias: basic and acidic residues; the sequence is MDISTRSKDPGS. Residues 1-57 are disordered; the sequence is MDISTRSKDPGSAERTAQKRKFPSPPHSSNGHSPQDTSTSPIKKKKKPGLLNSNNKE. The interval 1-850 is required for interaction with CCNT1; it reads MDISTRSKDP…QQQQQQQNQQ (850 aa). Ser12 participates in a covalent cross-link: Glycyl lysine isopeptide (Lys-Gly) (interchain with G-Cter in SUMO2). Ser24 carries the phosphoserine modification. Glycyl lysine isopeptide (Lys-Gly) (interchain with G-Cter in SUMO2) cross-links involve residues Lys56 and Lys70. Residues 75–268 are interaction with histone H3K4me0; the sequence is TDPVDVVPQD…YLAACQKRDN (194 aa). An interaction with histone H3K14ac region spans residues 75–406; it reads TDPVDVVPQD…VKLNFDMTAS (332 aa). Residues 88–133 form a PHD-type zinc finger; sequence DFYCWVCHREGQVLCCELCPRVYHAKCLRLTSEPEGDWFCPECEKI. The interval 88–327 is required for interaction with histone H3 and histone H4; sequence DFYCWVCHRE…INNCYLMSKE (240 aa). 8 residues coordinate Zn(2+): Cys91, Cys94, Cys103, Cys106, His111, Cys114, Cys127, and Cys130. One can recognise a Bromo domain in the interval 145-252; that stretch reads AMTMLTIEQL…KICEHEMNEI (108 aa). Zn(2+) is bound by residues Cys255, Cys258, and Cys274. One can recognise a PWWP domain in the interval 277 to 327; the sequence is PHPLVWAKLKGFPFWPAKALRDKDGQVDARFFGQHDRAWVPINNCYLMSKE. Lys390 participates in a covalent cross-link: Glycyl lysine isopeptide (Lys-Gly) (interchain with G-Cter in SUMO2). Phosphothreonine is present on Thr404. A Phosphoserine modification is found at Ser406. The tract at residues 412 to 512 is disordered; it reads SKPVLSGGTG…TTKTDKTSTT (101 aa). Lys413 is subject to N6-acetyllysine; alternate. A Glycyl lysine isopeptide (Lys-Gly) (interchain with G-Cter in SUMO2); alternate cross-link involves residue Lys413. Phosphoserine occurs at positions 417, 425, and 432. Positions 433–442 are enriched in polar residues; sequence PMSTNSSVHT. The residue at position 444 (Ser444) is a Phosphoserine. Lys453 participates in a covalent cross-link: Glycyl lysine isopeptide (Lys-Gly) (interchain with G-Cter in SUMO2). A phosphoserine mark is found at Ser460, Ser462, Ser465, Ser486, Ser490, and Ser495. Positions 472–489 are enriched in polar residues; the sequence is STASPASTKTGQAGSLSG. Lys505 participates in a covalent cross-link: Glycyl lysine isopeptide (Lys-Gly) (interchain with G-Cter in SUMO2). Phosphoserine is present on residues Ser514 and Ser523. Lys530 is covalently cross-linked (Glycyl lysine isopeptide (Lys-Gly) (interchain with G-Cter in SUMO2)). At Thr541 the chain carries Phosphothreonine. The residue at position 547 (Ser547) is a Phosphoserine. Lys549 is covalently cross-linked (Glycyl lysine isopeptide (Lys-Gly) (interchain with G-Cter in SUMO2)). Phosphothreonine is present on Thr563. The segment at 582 to 884 is disordered; sequence TAVEHSDSED…ITQSPSTSTI (303 aa). Basic and acidic residues-rich tracts occupy residues 585–597 and 606–631; these read EHSD…KSDS and DEQK…EPSA. Residues Lys611 and Lys645 each participate in a glycyl lysine isopeptide (Lys-Gly) (interchain with G-Cter in SUMO2) cross-link. Residues Ser652 and Ser655 each carry the phosphoserine modification. A compositionally biased stretch (basic and acidic residues) spans 656–696; that stretch reads EKADPGAVKDKASPEPEKDFSEKAKPSPHPIKDKLKGKDET. Lys657 is covalently cross-linked (Glycyl lysine isopeptide (Lys-Gly) (interchain with G-Cter in SUMO2)). Ser668, Ser682, Ser707, Ser709, and Ser737 each carry phosphoserine. Residues 718–738 show a composition bias toward basic and acidic residues; that stretch reads GEDHSGREGRKNKKEPKEPSP. Thr746 is modified (phosphothreonine). Residues Ser754 and Ser756 each carry the phosphoserine modification. Low complexity predominate over residues 766 to 799; the sequence is SSAQTSAAGATATTSTSSTVTVTAPAPAATGSPV. A compositionally biased stretch (polar residues) spans 818–832; sequence VWNSSSKFQTSSQKW. Residues 835–857 are compositionally biased toward low complexity; the sequence is QKMQRQQQQQQQQNQQQQPQSSQ. Positions 873–884 are enriched in polar residues; it reads KEITQSPSTSTI. Positions 875–1047 are required for homodimerization; the sequence is ITQSPSTSTI…YCCWNTSYCD (173 aa). Zn(2+) is bound by residues Cys1028, Cys1031, Cys1039, Cys1040, Cys1046, Cys1050, His1058, and Cys1062. The MYND-type zinc finger occupies 1028–1062; sequence CANCKKEAIFYCCWNTSYCDYPCQQAHWPEHMKSC. A required for recruitment to DNA damage sites and for interaction with the NuRD complex, CHD4, HDAC1, HDAC2 and KDM1A region spans residues 1028–1062; the sequence is CANCKKEAIFYCCWNTSYCDYPCQQAHWPEHMKSC. A disordered region spans residues 1071 to 1186; the sequence is QEADAEVNTE…KESRLDTFWD (116 aa). The span at 1085–1103 shows a compositional bias: low complexity; that stretch reads SSQGSSSSTQSAPSETASA. Residues 1104-1116 are compositionally biased toward basic and acidic residues; it reads SKEKETSAEKSKE. Lys1115 is covalently cross-linked (Glycyl lysine isopeptide (Lys-Gly) (interchain with G-Cter in SUMO2)). Residue Ser1119 is modified to Phosphoserine. The span at 1121 to 1140 shows a compositional bias: polar residues; the sequence is LDLSGSRETPSSILLGSNQG. Ser1141 is subject to Phosphoserine. The interval 1147–1186 is interaction with PRKCB1; the sequence is NKSSWSSSDEKRGSTRSDHNTSTSTKSLLPKESRLDTFWD. Basic and acidic residues-rich tracts occupy residues 1154-1165 and 1175-1186; these read SDEKRGSTRSDH and LPKESRLDTFWD.

As to quaternary structure, monomer and homodimer. Interacts with NuRD subcomplexes containing GATAD2A. Interacts with the histone deacetylase NuRD complex subunit CHD4; the interaction is direct, appears to occur with monomeric ZMYND8, and is increased following DNA damage. Interacts (via N-terminus) with the P-TEFb complex subunit CCNT1 (via central region); the interaction is direct and the association appears to occur between homodimeric ZMYND8 and the activated form of the P-TEFb complex. Interacts (via N-terminus) with DBN1 (via ADF-H domain); the interaction leads to sequestering of ZMYND8 in the cytoplasm. Interacts with the P-TEFb complex subunit CDK9; the association appears to occur between homodimeric ZMYND8 and the activated form of the P-TEFb complex. Interacts with EZH2; the interaction is dependent on the presence of chromatin. Interacts (via MYND domain) with the NuRD complex subunit GATAD2A. Interacts with histone H3 (via N-terminus) that is both methylated at 'Lys-4' (H3K4me1) and acetylated at 'Lys-14' (H3K14ac), with histone H3 (via N-terminus) unmodified at 'Lys-4' (H3K4me0) and acetylated at 'Lys-14' (H3K14ac), and with histone H3 (via N-terminus) di-methylated at 'Lys-36' (H3K36me2). Interacts (via Bromo domain) with histone H4 acetylated at 'Lys-16' (H4K16ac). Interacts with HDAC1. Interacts with HDAC2. Interacts with KDM1A. Interacts with KDM5C. Interacts with KDM5D. Interacts in vitro with PRKCB. Interacts with RNA polymerase II subunit POLR2A phosphorylated at 'Ser-5'. Interacts with ZNF592. Interacts with ZNF687. Does not interact with GATAD2B. Expressed in neurons (at protein level). Absent in astrocytes (at protein level). Expressed in all tissues examined with highest expression in brain, lung, pancreas, and placenta. Expressed in cutaneous T-cell lymphomas (CTCL).

The protein resides in the nucleus. Its subcellular location is the chromosome. It is found in the cytoplasm. In terms of biological role, chromatin reader that recognizes dual histone modifications such as histone H3.1 dimethylated at 'Lys-36' and histone H4 acetylated at 'Lys-16' (H3.1K36me2-H4K16ac) and histone H3 methylated at 'Lys-4' and histone H4 acetylated at 'Lys-14' (H3K4me1-H3K14ac). May act as a transcriptional corepressor for KDM5D by recognizing the dual histone signature H3K4me1-H3K14ac. May also act as a transcriptional corepressor for KDM5C and EZH2. Recognizes acetylated histone H4 and recruits the NuRD chromatin remodeling complex to damaged chromatin for transcriptional repression and double-strand break repair by homologous recombination. Also activates transcription elongation by RNA polymerase II through recruiting the P-TEFb complex to target promoters. Localizes to H3.1K36me2-H4K16ac marks at all-trans-retinoic acid (ATRA)-responsive genes and positively regulates their expression. Promotes neuronal differentiation by associating with regulatory regions within the MAPT gene, to enhance transcription of a protein-coding MAPT isoform and suppress the non-coding MAPT213 isoform. Suppresses breast cancer, and prostate cancer cell invasion and metastasis. The polypeptide is MYND-type zinc finger-containing chromatin reader ZMYND8 (ZMYND8) (Homo sapiens (Human)).